A 1349-amino-acid chain; its full sequence is Adhesion G protein-coupled receptor F5 (1349 aa).

Residues 1–24 (MKSSRTVTLYFVLIVICSSEATWS) form the signal peptide. Over 25 to 1016 (RPAEPIVHPL…PGSLLKILLD (992 aa)) the chain is Extracellular. 16 N-linked (GlcNAc...) asparagine glycosylation sites follow: Asn-73, Asn-94, Asn-185, Asn-254, Asn-270, Asn-286, Asn-299, Asn-326, Asn-337, Asn-349, Asn-396, Asn-470, Asn-503, Asn-538, Asn-649, and Asn-666. Positions 163–271 (PETYITLKIK…NSFQGTPSNE (109 aa)) constitute an SEA domain. 3 consecutive Ig-like domains span residues 268–366 (PSNE…LDVT), 367–464 (PIRI…IAVT), and 469–559 (ANLT…KDVT). Cys-291 and Cys-348 are joined by a disulfide. Cysteines 389 and 447 form a disulfide. Cys-490 and Cys-543 are oxidised to a cystine. Ser-819 carries the phosphoserine modification. 3 N-linked (GlcNAc...) asparagine glycosylation sites follow: Asn-820, Asn-958, and Asn-963. The GAIN-B domain occupies 842–1006 (TPPFLFHPNV…SILMSPDSPD (165 aa)). 2 disulfides stabilise this stretch: Cys-954-Cys-988 and Cys-973-Cys-990. The tract at residues 954–1006 (CVFWNFSLANNTGGWDSSGCTVEDDGRDNRDRVFCKCNHLTSFSILMSPDSPD) is GPS. Positions 994–1009 (TSFSILMSPDSPDPGS) are tethered agonist. Residues 1017 to 1036 (IISYIGLGFSIVSLAACLVV) traverse the membrane as a helical segment. Topologically, residues 1037-1055 (EAMVWKSVTKNRTSYMRHI) are cytoplasmic. The chain crosses the membrane as a helical span at residues 1056 to 1078 (CIVNIALCLLIADIWFIVAGAIH). Over 1079–1097 (DGHYPLNETACVAATFFIH) the chain is Extracellular. Residue Asn-1085 is glycosylated (N-linked (GlcNAc...) asparagine). A helical membrane pass occupies residues 1098 to 1120 (FFYLSVFFWMLTLGLMLFYRLIF). Residues 1121–1131 (ILHDASKSTQK) lie on the Cytoplasmic side of the membrane. Residues 1132–1154 (AIAFSLGYGCPLIISSITVGVTQ) traverse the membrane as a helical segment. The Extracellular portion of the chain corresponds to 1155 to 1173 (PQEVYMRKNACWLNWEDTR). The chain crosses the membrane as a helical span at residues 1174–1196 (ALLAFAIPALIIVVVNVSITVVV). Residues 1197–1216 (ITKILRPSVGDKPGKQEKSS) are Cytoplasmic-facing. Residues 1217–1239 (LFQISKSIGVLTPLLGLTWGFGL) traverse the membrane as a helical segment. Residues 1240 to 1248 (ATVIQGSNA) lie on the Extracellular side of the membrane. A helical membrane pass occupies residues 1249–1271 (VFHIIFTLLNAFQGLFILLFGCL). Over 1272–1349 (WDQKVQEALL…NSSSAYSLLN (78 aa)) the chain is Cytoplasmic. Residue Thr-1303 is modified to Phosphothreonine. The residue at position 1310 (Ser-1310) is a Phosphoserine. Over residues 1329-1343 (STPETTSSSVENSSS) the composition is skewed to low complexity. The tract at residues 1329 to 1349 (STPETTSSSVENSSSAYSLLN) is disordered.

The protein belongs to the G-protein coupled receptor 2 family. Adhesion G-protein coupled receptor (ADGR) subfamily. In terms of assembly, homodimer; disulfide-linked. Heterodimer of 2 chains generated by proteolytic processing; the large extracellular N-terminal fragment and the membrane-bound C-terminal fragment predominantly remain associated and non-covalently linked. Fragment generates by the processing enzyme furin remains attached to the extracellular N-terminal fragment. Interacts (via N-terminal extracellular domain) with SFTPD. Post-translationally, highly glycosylated. Proteolytically cleaved at multiple sites: one in the GPS region of the GAIN-B domain (S1 site) and the other in the SEA domain (S2 site). The proteolytic cleavage at S1 site generates an extracellular subunit and a seven-transmembrane subunit. The proteolytic cleavage at S2 site generates a fragment that undergoes proteolytic cleavage by the processing enzyme furin. In terms of tissue distribution, highly expressed in the lung and to a much lesser extent in the kidney and heart. Dense localization in alveolar walls of the lung and in the intercalated cells of the collecting duct of the kidney.

The protein localises to the cell membrane. With respect to regulation, as an adhesion G protein-coupled receptor (aGPCR) exhibits a large N-terminal extracellular domain containing highly conserved GPCR autoproteolysis-inducing (GAIN) domain. During synthesis, intracellular autoproteolytic processing of nascent chain within the GAIN domain generates a mature protein, consisting of an N-terminal fragment that is non-covalently linked to the C-terminal fragment. The mature protein is routed to the plasma membrane where the N- and C-terminal fragments remain associated, forming the holoreceptor. Dissociation of the aGPCR fragments stimulates G protein signaling through the action of the tethered-peptide agonist stalk that is occluded within the GAIN domain in the holoreceptor form. This dissociation might be induced by ligand binding, such as that of sFNDC4. In terms of biological role, receptor that plays a critical role in lung surfactant homeostasis. May play a role in controlling adipocyte function. Its function is as follows. Adhesion G protein-coupled receptor. In alveolar type II (ATII or AT2) cells, required for normal lung surfactant homeostasis. Modulation of both surfactant secretion and uptake by ATII cells is mediated by the downstream activation of GNAQ/GNA11 proteins and may be a consequence of increased cortical F-actin assembly induced by ADGRF5 activation. In the kidney, may play a role in the regulation of acid excretion into the primary urine, possibly by regulating the surface expression of V-ATPase proton pump. As a receptor for soluble FNDC4 (sFNDC4), required for proper systemic glucose tolerance, specifically sensitizing white adipose tissue to insulin. Also plays a role in sFNDC4-induced decrease of local inflammation in white adipose tissue. The protein is Adhesion G protein-coupled receptor F5 (Adgrf5) of Rattus norvegicus (Rat).